We begin with the raw amino-acid sequence, 1057 residues long: Exportin-1 (1057 aa).

The Importin N-terminal domain occupies 36–102 (AQMVLGKFQE…KNYIVSLIIR (67 aa)). 11 HEAT repeats span residues 239–275 (AEPS…LNLG), 281–321 (AVFI…FIHT), 462–501 (NTQH…AQNK), 506–544 (RFLV…QYPR), 551–588 (KFLK…QCKR), 596–633 (EESQ…YMIA), 739–776 (KETL…DYRT), 781–818 (TRDP…TTLS), 855–892 (QQFK…NVSK), 902–925 (KTYL…KSGF), and 926–965 (ALEC…YVKE).

Belongs to the exportin family. In terms of assembly, component of a nuclear export receptor complex.

The protein resides in the nucleus. Its subcellular location is the cytoplasm. It localises to the perinuclear region. Mediates the nuclear export of cellular proteins (cargos) bearing a leucine-rich nuclear export signal (NES). The sequence is that of Exportin-1 (xpo1) from Dictyostelium discoideum (Social amoeba).